A 361-amino-acid chain; its full sequence is Salt tolerance receptor-like cytoplasmic kinase 1 (361 aa).

Residues Cys-5, Cys-10, and Cys-14 are each lipidated (S-palmitoyl cysteine). Residues 67–347 (GFSSRVIGHG…RALQEKTSAL (281 aa)) enclose the Protein kinase domain. ATP contacts are provided by residues 73–81 (IGHGGFSTV) and Lys-95. Asp-195 serves as the catalytic Proton acceptor.

It belongs to the protein kinase superfamily. Ser/Thr protein kinase family. Self-interacts. Interacts with CATA, CATB and CATC at the plasma membrane. Post-translationally, palmitoylated. Palmotylation at Cys-5, Cys-10 and Cys-14 by DHHC9 is required for plasma membrane targeting and STRK1 function. Autophosphorylated. As to expression, accumulates in seeds. Mainly expressed in young roots, and, to a lower extent, in leaf veins, seedlings, stems, leaf sheath and young spikelet.

The protein localises to the cell membrane. It carries out the reaction L-seryl-[protein] + ATP = O-phospho-L-seryl-[protein] + ADP + H(+). The catalysed reaction is L-threonyl-[protein] + ATP = O-phospho-L-threonyl-[protein] + ADP + H(+). The enzyme catalyses L-tyrosyl-[protein] + ATP = O-phospho-L-tyrosyl-[protein] + ADP + H(+). In terms of biological role, acts probably as a dual specificity protein kinase. Regulates hydrogen peroxide (H(2)O(2)) homeostasis and improves salt tolerance by phosphorylating tyrosine residues of CATC thus activating its catalase activity. Promotes growth at the seedling stage and prevents grain yield loss under salt stress conditions. This chain is Salt tolerance receptor-like cytoplasmic kinase 1, found in Oryza sativa subsp. japonica (Rice).